A 362-amino-acid chain; its full sequence is MEAEDYNASYEDYPDDVDPIVVLEELSPLEGRVVRILLVAVYSVICLLGILGNGLVIVMITCKMKRTVNTVWFLNLAVADFLFNVFLPVHIAYAALDYHWVFGTAMCKISNFLLIHNMFTSVFLLTVISFDRCVSVLLPVWSQNHRSVRLAYTACLVIWVLAFFLSSPSLVFRDTARLHGKISCFNNFSLSAAVSSPWPAHPQVDPVGSGRHKVVTITRFLCGFLVPGLITTACYLTIVYKLQRSRLAKTKKPFKIILTIIVTFFLCWCPYHAFYLLELRRGSVPPSVFSLGVPLATAIAIANSCMNPILYVFMGQDFKKFRVALFSRLVNALSEDTGHSSYPSHRSFTKMSSMNERETGML.

Residues 1–37 (MEAEDYNASYEDYPDDVDPIVVLEELSPLEGRVVRIL) lie on the Extracellular side of the membrane. An N-linked (GlcNAc...) asparagine glycan is attached at Asn7. Residues 38–58 (LVAVYSVICLLGILGNGLVIV) form a helical membrane-spanning segment. Topologically, residues 59-70 (MITCKMKRTVNT) are cytoplasmic. The helical transmembrane segment at 71 to 91 (VWFLNLAVADFLFNVFLPVHI) threads the bilayer. At 92 to 108 (AYAALDYHWVFGTAMCK) the chain is on the extracellular side. A disulfide bond links Cys107 and Cys184. Residues 109 to 129 (ISNFLLIHNMFTSVFLLTVIS) form a helical membrane-spanning segment. Topologically, residues 130–151 (FDRCVSVLLPVWSQNHRSVRLA) are cytoplasmic. Residues 152–172 (YTACLVIWVLAFFLSSPSLVF) traverse the membrane as a helical segment. At 173 to 219 (RDTARLHGKISCFNNFSLSAAVSSPWPAHPQVDPVGSGRHKVVTITR) the chain is on the extracellular side. N-linked (GlcNAc...) asparagine glycosylation is present at Asn187. The chain crosses the membrane as a helical span at residues 220–240 (FLCGFLVPGLITTACYLTIVY). The Cytoplasmic segment spans residues 241 to 255 (KLQRSRLAKTKKPFK). Residues 256–276 (IILTIIVTFFLCWCPYHAFYL) form a helical membrane-spanning segment. At 277-281 (LELRR) the chain is on the extracellular side. A helical transmembrane segment spans residues 282–302 (GSVPPSVFSLGVPLATAIAIA). Topologically, residues 303–362 (NSCMNPILYVFMGQDFKKFRVALFSRLVNALSEDTGHSSYPSHRSFTKMSSMNERETGML) are cytoplasmic. Ser334 carries the post-translational modification Phosphoserine. The segment at 336–362 (DTGHSSYPSHRSFTKMSSMNERETGML) is disordered. The residue at position 337 (Thr337) is a Phosphothreonine. The segment covering 339–354 (HSSYPSHRSFTKMSSM) has biased composition (polar residues). Residues Ser344, Ser347, and Ser353 each carry the phosphoserine modification.

This sequence belongs to the chemokine-like receptor (CMKLR) family. As to expression, widely expressed in several tissues including adipose, muscle, liver and brain.

The protein resides in the cell membrane. In terms of biological role, receptor for the chemoattractant adipokine chemerin/RARRES2 and for the omega-3 fatty acid derived molecule resolvin E1. Interaction with RARRES2 initiates activation of G proteins G(i)/G(o) and beta-arrestin pathways inducing cellular responses via second messenger pathways such as intracellular calcium mobilization, phosphorylation of MAP kinases MAPK1/MAPK3 (ERK1/2), TYRO3, MAPK14/P38MAPK and PI3K leading to multifunctional effects, like, reduction of immune responses, enhancing of adipogenesis and angionesis. Resolvin E1 down-regulates cytokine production in macrophages by reducing the activation of MAPK1/3 (ERK1/2) and NF-kappa-B. Positively regulates adipogenesis and adipocyte metabolism. This chain is Chemerin-like receptor 1 (CMLKR1), found in Bos taurus (Bovine).